Here is a 152-residue protein sequence, read N- to C-terminus: MLP-like protein 165 (152 aa).

It belongs to the MLP family.

This Arabidopsis thaliana (Mouse-ear cress) protein is MLP-like protein 165 (MLP165).